The sequence spans 548 residues: MDSQRNLLVIALLFVSFMIWQAWEQDKNPQPQAQQTTQTTTTAAGSAADQGVPASGQGKLISVKTDVLDLTINTRGGDVEQALLPAYPKELNSTQPFQLLETSPQFIYQAQSGLTGRDGPDNPANGPRPLYNVEKDAYVLAEGQNELQVPMTYTDAAGNTFTKTFVLKRGDYAVNVNYNVQNAGEKPLEISSFGQLKQSITLPPHLDTGSSNFALHTFRGAAYSTPDEKYEKYKFDTIADNENLNISSKGGWVAMLQQYFATAWIPHNDGTNNFYTANLGNGIVAIGYKSQPVLVQPGQTGAMNSTLWVGPEIQDKMAAVAPHLDLTVDYGWLWFISQPLFKLLKWIHSFVGNWGFSIIIITFIVRGIMYPLTKAQYTSMAKMRMLQPKIQAMRERLGDDKQRISQEMMALYKAEKVNPLGGCFPLLIQMPIFLALYYMLMGSVELRQAPFALWIHDLSAQDPYYILPILMGVTMFFIQKMSPTTVTDPMQQKIMTFMPVIFTVFFLWFPSGLVLYYIVSNLVTIIQQQLIYRGLEKRGLHSREKKKS.

Residues 6–26 (NLLVIALLFVSFMIWQAWEQD) form a helical membrane-spanning segment. The tract at residues 28–55 (NPQPQAQQTTQTTTTAAGSAADQGVPAS) is disordered. The segment covering 30–50 (QPQAQQTTQTTTTAAGSAADQ) has biased composition (low complexity). Helical transmembrane passes span 350 to 370 (FVGNWGFSIIIITFIVRGIMY), 420 to 440 (LGGCFPLLIQMPIFLALYYML), 458 to 478 (LSAQDPYYILPILMGVTMFFI), and 499 to 519 (PVIFTVFFLWFPSGLVLYYIV).

It belongs to the OXA1/ALB3/YidC family. Type 1 subfamily. In terms of assembly, interacts with the Sec translocase complex via SecD. Specifically interacts with transmembrane segments of nascent integral membrane proteins during membrane integration.

It localises to the cell inner membrane. Functionally, required for the insertion and/or proper folding and/or complex formation of integral membrane proteins into the membrane. Involved in integration of membrane proteins that insert both dependently and independently of the Sec translocase complex, as well as at least some lipoproteins. Aids folding of multispanning membrane proteins. The sequence is that of Membrane protein insertase YidC from Shigella flexneri.